Consider the following 122-residue polypeptide: Large ribosomal subunit protein eL22B (122 aa).

Belongs to the eukaryotic ribosomal protein eL22 family. In terms of assembly, component of the large ribosomal subunit (LSU). Mature yeast ribosomes consist of a small (40S) and a large (60S) subunit. The 40S small subunit contains 1 molecule of ribosomal RNA (18S rRNA) and 33 different proteins (encoded by 57 genes). The large 60S subunit contains 3 rRNA molecules (25S, 5.8S and 5S rRNA) and 46 different proteins (encoded by 81 genes).

It localises to the cytoplasm. Functionally, component of the ribosome, a large ribonucleoprotein complex responsible for the synthesis of proteins in the cell. The small ribosomal subunit (SSU) binds messenger RNAs (mRNAs) and translates the encoded message by selecting cognate aminoacyl-transfer RNA (tRNA) molecules. The large subunit (LSU) contains the ribosomal catalytic site termed the peptidyl transferase center (PTC), which catalyzes the formation of peptide bonds, thereby polymerizing the amino acids delivered by tRNAs into a polypeptide chain. The nascent polypeptides leave the ribosome through a tunnel in the LSU and interact with protein factors that function in enzymatic processing, targeting, and the membrane insertion of nascent chains at the exit of the ribosomal tunnel. The polypeptide is Large ribosomal subunit protein eL22B (Saccharomyces cerevisiae (strain ATCC 204508 / S288c) (Baker's yeast)).